The primary structure comprises 585 residues: Protein NRT1/ PTR FAMILY 8.3 (585 aa).

Glycine 2 is subject to N-acetylglycine. The chain crosses the membrane as a helical span at residues 91-111 (WQGTCYLTPLIGAVLADAYWG). Position 115 is a phosphothreonine (threonine 115). A run of 10 helical transmembrane segments spans residues 116–136 (IACF…SASV), 154–174 (PAQY…TGGI), 200–220 (FFNW…SLLV), 228–248 (WGLG…SFFF), 351–371 (FPIW…STMF), 387–407 (LPPA…VPLY), 431–451 (MGIG…VEII), 472–492 (VLWQ…YFIG), 511–531 (ALAL…LTLV), and 556–576 (FFWL…FSAA).

Belongs to the major facilitator superfamily. Proton-dependent oligopeptide transporter (POT/PTR) (TC 2.A.17) family. Highly expressed in young leaves, roots and germinating seeds, intermediately in stems, flowers and mature leaves and at low level in siliques.

Its subcellular location is the vacuole membrane. Inhibited by leucyl-ethionine. Peptide transporter. Mediates the transport of di- and tripeptides. High affinity, low capacity transporter. Can also transport histidine. This Arabidopsis thaliana (Mouse-ear cress) protein is Protein NRT1/ PTR FAMILY 8.3 (NPF8.3).